A 67-amino-acid chain; its full sequence is Large ribosomal subunit protein uL29 (67 aa).

Belongs to the universal ribosomal protein uL29 family.

This chain is Large ribosomal subunit protein uL29, found in Methanosarcina barkeri (strain Fusaro / DSM 804).